The chain runs to 102 residues: Urease subunit beta (102 aa).

It belongs to the urease beta subunit family. As to quaternary structure, heterotrimer of UreA (gamma), UreB (beta) and UreC (alpha) subunits. Three heterotrimers associate to form the active enzyme.

It is found in the cytoplasm. The enzyme catalyses urea + 2 H2O + H(+) = hydrogencarbonate + 2 NH4(+). The protein operates within nitrogen metabolism; urea degradation; CO(2) and NH(3) from urea (urease route): step 1/1. The chain is Urease subunit beta from Bordetella parapertussis (strain 12822 / ATCC BAA-587 / NCTC 13253).